The chain runs to 279 residues: MNSEQSIRELGNEVPSEDLELPGRKTSNFQVLQPCRDEGASAECSIVECGKNYEPVISHQVIPDLNKETSVAYLQKELEILRASNTKLQEKLAKEDKEKRRLKLKLELQEKAAEADIAERTAALVEEVYFAQRERDEAIMCRLQLALKERDEAIAHVKHMEMSLKMLENINPKENDMTLQELLDRINNADTGIAIQKNGAVIVDTIYKTTGCRKRITAEEMSAVLEERDAALSQCKQLHQRLLDLKKQNQTSTNNTKHPTAKNNQEHTLKYNLNIASIN.

The span at 1–11 (MNSEQSIRELG) shows a compositional bias: basic and acidic residues. Positions 1-21 (MNSEQSIRELGNEVPSEDLEL) are disordered. Coiled coils occupy residues 65 to 169 (LNKE…MLEN) and 218 to 255 (AEEM…STNN). The segment at 247 to 268 (KQNQTSTNNTKHPTAKNNQEHT) is disordered. Residues 248–263 (QNQTSTNNTKHPTAKN) show a composition bias toward polar residues.

The chain is Mirror-image polydactyly gene 1 protein homolog (Mipol1) from Mus musculus (Mouse).